A 583-amino-acid polypeptide reads, in one-letter code: Thiol:disulfide interchange protein DsbD (583 aa).

Positions 1–20 are cleaved as a signal peptide; it reads MLKRFIFLLVGITLTLSAHA. 2 cysteine pairs are disulfide-bonded: cysteine 123–cysteine 128 and cysteine 200–cysteine 322. The next 8 helical transmembrane spans lie at 185–205, 237–257, 261–281, 302–322, 344–364, 375–395, 405–425, and 433–453; these read IFWF…LPML, LTYT…QVAL, PVLI…FGLF, GGAF…ASPC, GLAL…ITLF, WLLK…VFLL, PLMW…VIPT, and VRIV…NLVW. One can recognise a Thioredoxin domain in the interval 440–583; sequence TFAVASYPWA…NQFLNWLNQL (144 aa). Cysteine 500 and cysteine 503 are oxidised to a cystine.

This sequence belongs to the thioredoxin family. DsbD subfamily.

The protein resides in the cell inner membrane. The catalysed reaction is [protein]-dithiol + NAD(+) = [protein]-disulfide + NADH + H(+). It carries out the reaction [protein]-dithiol + NADP(+) = [protein]-disulfide + NADPH + H(+). Functionally, required to facilitate the formation of correct disulfide bonds in some periplasmic proteins and for the assembly of the periplasmic c-type cytochromes. Acts by transferring electrons from cytoplasmic thioredoxin to the periplasm. This transfer involves a cascade of disulfide bond formation and reduction steps. The chain is Thiol:disulfide interchange protein DsbD from Actinobacillus pleuropneumoniae serotype 5b (strain L20).